The sequence spans 83 residues: Small ribosomal subunit protein bS18A (83 aa).

It belongs to the bacterial ribosomal protein bS18 family. In terms of assembly, part of the 30S ribosomal subunit. Forms a tight heterodimer with protein bS6.

Its function is as follows. Binds as a heterodimer with protein bS6 to the central domain of the 16S rRNA, where it helps stabilize the platform of the 30S subunit. The chain is Small ribosomal subunit protein bS18A from Nocardia farcinica (strain IFM 10152).